Reading from the N-terminus, the 158-residue chain is L-alanine exporter AlaE (158 aa).

The next 4 membrane-spanning stretches (helical) occupy residues 23-43, 53-73, 92-112, and 117-137; these read FAMVVYCSVVGMMIEIFVSGM, LVAIPVNMVIAWPYGLYRDAV, VIAYITFQSPVYAAILLFVGA, and IITAVSSNIVVSMMMGAAYGY.

Belongs to the AlaE exporter family.

Its subcellular location is the cell inner membrane. Exports L-alanine. This Cronobacter sakazakii (strain ATCC BAA-894) (Enterobacter sakazakii) protein is L-alanine exporter AlaE.